Here is a 139-residue protein sequence, read N- to C-terminus: Protein archease (139 aa).

Aspartate 12, aspartate 138, and isoleucine 139 together coordinate Ca(2+).

It belongs to the archease family.

Functionally, activates the tRNA-splicing ligase complex by facilitating the enzymatic turnover of catalytic subunit RtcB. Acts by promoting the guanylylation of RtcB, a key intermediate step in tRNA ligation. Can also alter the NTP specificity of RtcB such that ATP, dGTP or ITP is used efficiently. The protein is Protein archease of Saccharolobus islandicus (strain L.S.2.15 / Lassen #1) (Sulfolobus islandicus).